A 130-amino-acid polypeptide reads, in one-letter code: Small ribosomal subunit protein uS8 (130 aa).

Belongs to the universal ribosomal protein uS8 family. Part of the 30S ribosomal subunit.

In terms of biological role, one of the primary rRNA binding proteins, it binds directly to 16S rRNA central domain where it helps coordinate assembly of the platform of the 30S subunit. This Methanococcus voltae protein is Small ribosomal subunit protein uS8.